A 162-amino-acid polypeptide reads, in one-letter code: Putative pre-16S rRNA nuclease (162 aa).

It belongs to the YqgF nuclease family.

The protein resides in the cytoplasm. Functionally, could be a nuclease involved in processing of the 5'-end of pre-16S rRNA. This chain is Putative pre-16S rRNA nuclease, found in Brucella melitensis biotype 2 (strain ATCC 23457).